A 288-amino-acid chain; its full sequence is Orotidine 5'-phosphate decarboxylase (288 aa).

Catalysis depends on lysine 97, which acts as the Proton donor.

This sequence belongs to the OMP decarboxylase family. Type 2 subfamily.

The enzyme catalyses orotidine 5'-phosphate + H(+) = UMP + CO2. It functions in the pathway pyrimidine metabolism; UMP biosynthesis via de novo pathway; UMP from orotate: step 2/2. The sequence is that of Orotidine 5'-phosphate decarboxylase from Clostridium tetani (strain Massachusetts / E88).